We begin with the raw amino-acid sequence, 291 residues long: Protein CMSS1 (291 aa).

The disordered stretch occupies residues 1 to 96 (MADDLGDEWW…KKTITDVLTS (96 aa)). Residues 17 to 27 (DVPEVEEETEH) show a composition bias toward acidic residues. The span at 58-79 (VKKECFITQERSEEKPDNESNK) shows a compositional bias: basic and acidic residues.

This sequence belongs to the CMS1 family.

This Danio rerio (Zebrafish) protein is Protein CMSS1 (cmss1).